The following is a 564-amino-acid chain: Sulfite reductase [NADPH] hemoprotein beta-component 2 (564 aa).

[4Fe-4S] cluster contacts are provided by C426, C432, C471, and C475. C475 contributes to the siroheme binding site.

It belongs to the nitrite and sulfite reductase 4Fe-4S domain family. In terms of assembly, alpha(8)-beta(8). The alpha component is a flavoprotein, the beta component is a hemoprotein. Siroheme serves as cofactor. The cofactor is [4Fe-4S] cluster.

It carries out the reaction hydrogen sulfide + 3 NADP(+) + 3 H2O = sulfite + 3 NADPH + 4 H(+). Its pathway is sulfur metabolism; hydrogen sulfide biosynthesis; hydrogen sulfide from sulfite (NADPH route): step 1/1. Component of the sulfite reductase complex that catalyzes the 6-electron reduction of sulfite to sulfide. This is one of several activities required for the biosynthesis of L-cysteine from sulfate. The protein is Sulfite reductase [NADPH] hemoprotein beta-component 2 of Klebsiella pneumoniae (strain 342).